We begin with the raw amino-acid sequence, 313 residues long: Ribosomal RNA small subunit methyltransferase H (313 aa).

Residues 35–37, aspartate 55, phenylalanine 79, aspartate 101, and glutamine 108 each bind S-adenosyl-L-methionine; that span reads GGH.

The protein belongs to the methyltransferase superfamily. RsmH family.

The protein localises to the cytoplasm. The catalysed reaction is cytidine(1402) in 16S rRNA + S-adenosyl-L-methionine = N(4)-methylcytidine(1402) in 16S rRNA + S-adenosyl-L-homocysteine + H(+). Functionally, specifically methylates the N4 position of cytidine in position 1402 (C1402) of 16S rRNA. In Escherichia coli O7:K1 (strain IAI39 / ExPEC), this protein is Ribosomal RNA small subunit methyltransferase H.